The chain runs to 543 residues: T-complex protein 1 subunit eta (543 aa).

At Met-1 the chain carries N-acetylmethionine. Residue Gly-41 coordinates ADP. Gly-41 is an ATP binding site. An N6-acetyllysine modification is found at Lys-67. Residue Asp-92 coordinates Mg(2+). Gly-93, Thr-94, Thr-95, Ser-96, Ser-164, and Ser-165 together coordinate ADP. Gly-93 provides a ligand contact to ATP. Ser-96 is a binding site for ATP. 2 positions are modified to N6-acetyllysine: Lys-250 and Lys-320. 2 residues coordinate ATP: Arg-398 and Gly-409. ADP is bound at residue Gly-409. Lys-430 is covalently cross-linked (Glycyl lysine isopeptide (Lys-Gly) (interchain with G-Cter in SUMO2)). Residues Glu-494 and Arg-499 each coordinate ADP. An ATP-binding site is contributed by Arg-499. Residues 524–543 (RSTVDAPTAAGRGRGRGRPH) are disordered. Arg-535 is subject to Omega-N-methylarginine.

Belongs to the TCP-1 chaperonin family. Component of the chaperonin-containing T-complex (TRiC), a hexadecamer composed of two identical back-to-back stacked rings enclosing a protein folding chamber. Each ring is made up of eight different subunits: TCP1/CCT1, CCT2, CCT3, CCT4, CCT5, CCT6A/CCT6, CCT7, CCT8. Interacts with PACRG. Interacts with DLEC1.

It is found in the cytoplasm. It carries out the reaction ATP + H2O = ADP + phosphate + H(+). Component of the chaperonin-containing T-complex (TRiC), a molecular chaperone complex that assists the folding of actin, tubulin and other proteins upon ATP hydrolysis. The TRiC complex mediates the folding of WRAP53/TCAB1, thereby regulating telomere maintenance. The sequence is that of T-complex protein 1 subunit eta (CCT7) from Homo sapiens (Human).